Here is an 83-residue protein sequence, read N- to C-terminus: UPF0297 protein Moth_1643 (83 aa).

It belongs to the UPF0297 family.

This Moorella thermoacetica (strain ATCC 39073 / JCM 9320) protein is UPF0297 protein Moth_1643.